Here is a 258-residue protein sequence, read N- to C-terminus: Probable parvulin-type peptidyl-prolyl cis-trans isomerase (258 aa).

A signal peptide spans 1–19; the sequence is MKRIAMLAAACVIAVPAFA. One can recognise a PpiC domain in the interval 127–219; it reads KMEYKVRHIL…FGWHVIQVDD (93 aa). Positions 158 to 175 are enriched in basic and acidic residues; sequence DDLAKKNSKDPGSAERGG. The segment at 158-178 is disordered; that stretch reads DDLAKKNSKDPGSAERGGDLG.

It belongs to the PpiC/parvulin rotamase family.

It catalyses the reaction [protein]-peptidylproline (omega=180) = [protein]-peptidylproline (omega=0). This Bordetella bronchiseptica (strain ATCC BAA-588 / NCTC 13252 / RB50) (Alcaligenes bronchisepticus) protein is Probable parvulin-type peptidyl-prolyl cis-trans isomerase.